The following is a 90-amino-acid chain: Small ribosomal subunit protein uS15 (90 aa).

It belongs to the universal ribosomal protein uS15 family. In terms of assembly, part of the 30S ribosomal subunit. Forms a bridge to the 50S subunit in the 70S ribosome, contacting the 23S rRNA.

One of the primary rRNA binding proteins, it binds directly to 16S rRNA where it helps nucleate assembly of the platform of the 30S subunit by binding and bridging several RNA helices of the 16S rRNA. In terms of biological role, forms an intersubunit bridge (bridge B4) with the 23S rRNA of the 50S subunit in the ribosome. This chain is Small ribosomal subunit protein uS15, found in Wolbachia sp. subsp. Drosophila simulans (strain wRi).